Reading from the N-terminus, the 238-residue chain is Serine protease SplA (238 aa).

An N-terminal signal peptide occupies residues 1–38 (MNKNVMVKGLTALTILTILTSLGFAENISNQPHSIAKA). Residues H77, D116, and S192 each act as charge relay system in the active site.

Belongs to the peptidase S1B family.

The protein resides in the secreted. This is Serine protease SplA (splA) from Staphylococcus aureus (strain COL).